The chain runs to 396 residues: L-lactate dehydrogenase (396 aa).

The 380-residue stretch at 1–380 (MIISAASDYR…SGDSLVQELG (380 aa)) folds into the FMN hydroxy acid dehydrogenase domain. Residue Tyr-24 coordinates substrate. Residues Ser-106 and Gln-127 each contribute to the FMN site. Tyr-129 lines the substrate pocket. Thr-155 is an FMN binding site. Arg-164 contacts substrate. Lys-251 contacts FMN. Residue His-275 is the Proton acceptor of the active site. Substrate is bound at residue Arg-278. Residue 306–330 (DSGIRNGLDVVRMIALGADTVLLGR) coordinates FMN.

The protein belongs to the FMN-dependent alpha-hydroxy acid dehydrogenase family. FMN serves as cofactor.

The protein localises to the cell inner membrane. The catalysed reaction is (S)-lactate + A = pyruvate + AH2. Functionally, catalyzes the conversion of L-lactate to pyruvate. Is coupled to the respiratory chain. In Salmonella newport (strain SL254), this protein is L-lactate dehydrogenase.